The following is a 541-amino-acid chain: Carotenoid 9,10(9',10')-cleavage dioxygenase 1 (541 aa).

Fe cation contacts are provided by H222, H270, H336, and H526.

This sequence belongs to the carotenoid oxygenase family. It depends on Fe(2+) as a cofactor.

It catalyses the reaction all-trans-zeaxanthin + 2 O2 = 4,9-dimethyldodeca-2,4,6,8,10-pentaenedial + 2 (3R)-hydroxy-beta-ionone. Functionally, cleaves a variety of carotenoids at the 9-10 and 9'-10' double bonds. Probably not involved in abscisic acid biosynthesis. This is Carotenoid 9,10(9',10')-cleavage dioxygenase 1 (CCD1) from Pisum sativum (Garden pea).